The chain runs to 409 residues: Ribose-phosphate pyrophosphokinase 3, chloroplastic (409 aa).

Low complexity-rich tracts occupy residues 1–16 and 34–43; these read MATA…PAAA and PASAFARPSP. Residues 1-43 form a disordered region; sequence MATAASASASASPAAAFGAKTRRPGPSPSPSPSPASAFARPSP. The N-terminal 44 residues, 1–44, are a transit peptide targeting the chloroplast; it reads MATAASASASASPAAAFGAKTRRPGPSPSPSPSPASAFARPSPR. Mg(2+) is bound by residues aspartate 229 and histidine 231. Positions 312–327 are binding of phosphoribosylpyrophosphate; sequence GRHVVIVDDLVQSGGT.

Belongs to the ribose-phosphate pyrophosphokinase family. It depends on Mg(2+) as a cofactor.

It localises to the plastid. It is found in the chloroplast. The catalysed reaction is D-ribose 5-phosphate + ATP = 5-phospho-alpha-D-ribose 1-diphosphate + AMP + H(+). The sequence is that of Ribose-phosphate pyrophosphokinase 3, chloroplastic from Oryza sativa subsp. japonica (Rice).